The following is a 575-amino-acid chain: RecBCD enzyme subunit RecD (575 aa).

170–177 (GGPGTGKT) contributes to the ATP binding site.

This sequence belongs to the RecD family. As to quaternary structure, heterotrimer of RecB, RecC and RecD. All subunits contribute to DNA-binding.

The catalysed reaction is Couples ATP hydrolysis with the unwinding of duplex DNA at the replication fork by translocating in the 5'-3' direction. This creates two antiparallel DNA single strands (ssDNA). The leading ssDNA polymer is the template for DNA polymerase III holoenzyme which synthesizes a continuous strand.. It carries out the reaction ATP + H2O = ADP + phosphate + H(+). In terms of biological role, a helicase/nuclease that prepares dsDNA breaks (DSB) for recombinational DNA repair. Binds to DSBs and unwinds DNA via a highly rapid and processive ATP-dependent bidirectional helicase activity. Holoenzyme degrades any linearized DNA that is unable to undergo homologous recombination. In the holoenzyme this subunit has ssDNA-dependent ATPase and 5'-3' helicase activity. When added to pre-assembled RecBC greatly stimulates nuclease activity and augments holoenzyme processivity. Unlike the case in E.coli, suppresses RecA-dependent homologous recombination, is instead required for single-strand annealing pathway repair of DSB. A helicase/nuclease that prepares dsDNA breaks (DSB) for recombinational DNA repair. Binds to DSBs and unwinds DNA via a highly rapid and processive ATP-dependent bidirectional helicase activity. Unwinds dsDNA until it encounters a Chi (crossover hotspot instigator) sequence from the 3' direction. Cuts ssDNA a few nucleotides 3' to the Chi site. The properties and activities of the enzyme are changed at Chi. The Chi-altered holoenzyme produces a long 3'-ssDNA overhang and facilitates RecA-binding to the ssDNA for homologous DNA recombination and repair. Holoenzyme degrades any linearized DNA that is unable to undergo homologous recombination. In the holoenzyme this subunit has ssDNA-dependent ATPase and 5'-3' helicase activity. When added to pre-assembled RecBC greatly stimulates nuclease activity and augments holoenzyme processivity. Negatively regulates the RecA-loading ability of RecBCD. This Mycobacterium tuberculosis (strain CDC 1551 / Oshkosh) protein is RecBCD enzyme subunit RecD.